The chain runs to 507 residues: Xylose import ATP-binding protein XylG (507 aa).

2 consecutive ABC transporter domains span residues 5–242 and 259–504; these read LKMT…VGRE and LEVK…LSEK. 37–44 serves as a coordination point for ATP; it reads GENGSGKS.

The protein belongs to the ABC transporter superfamily. Xylose importer (TC 3.A.1.2.4) family. The complex is composed of two ATP-binding proteins (XylG), two transmembrane proteins (XylH) and a solute-binding protein (XylF).

It is found in the cell inner membrane. It carries out the reaction D-xylose(out) + ATP + H2O = D-xylose(in) + ADP + phosphate + H(+). Its function is as follows. Part of the ABC transporter complex XylFGH involved in xylose import. Responsible for energy coupling to the transport system. The chain is Xylose import ATP-binding protein XylG from Photobacterium profundum (strain SS9).